A 484-amino-acid chain; its full sequence is MEQYLPQAKEFISFIDKSPSPYHAVQYFSEILKSKGFIHLSEKQMWDIQPNKKYFFTRNQSCISAFAVGGKYKPGNGFNIAAAHTDSPNFKVRPVSKVESVGYQQVGVETYGGGLWYTWFDRDLTVAGRVIVKSGDGSYESKLVHIKKPILRIPSLAIHLDRSVNTDGFKYNTQNHLVPMIASKLSEPVESKSTTTTTTTESPKTSDPQDVNSSTTKHHAVLLELLSKELGCSVGDIQNFDLSVCDTQPAAIGGALDEFIFSPRCDNLGMSYCAMIGLLNVKESTLAQEENVLNVILFDNEEVGSSSPQGACAPLINDTISRVNSSMFASTCKPHELNNFIDLTLRNSFLISADMAHAIHPNYTANHEPLHRPALNKGPVIKYNANLRYASNGPTSFVILDICKKNGIPIQEFLVKNDSPCGSTIGPIISGTYGIRTVDIGNPQLSMHSIRETCGVADITHGINLIQKYFEQFTKLDIIKSDLE.

At Met-1 the chain carries N-acetylmethionine. His-84 contributes to the Zn(2+) binding site. His-159 is a substrate binding site. Residues Pro-188 to Ser-206 are compositionally biased toward low complexity. The disordered stretch occupies residues Pro-188–Ser-213. Zn(2+) is bound at residue Asp-266. Glu-301 lines the substrate pocket. Residues Glu-302 and Asp-354 each contribute to the Zn(2+) site. Residues Asp-354, His-357, Lys-382, and Tyr-389 each coordinate substrate. His-448 is a Zn(2+) binding site.

This sequence belongs to the peptidase M18 family. In terms of assembly, tetrahedron-shaped homododecamer built from six homodimers. It depends on Zn(2+) as a cofactor.

Its subcellular location is the cytoplasm. It carries out the reaction Release of an N-terminal aspartate or glutamate from a peptide, with a preference for aspartate.. Likely to play an important role in intracellular protein and peptide metabolism. This is Aspartyl aminopeptidase (dnpep) from Dictyostelium discoideum (Social amoeba).